A 447-amino-acid polypeptide reads, in one-letter code: N-succinylarginine dihydrolase (447 aa).

Residues 19–28 (AGLSFGNEAS), Asn-110, and 137–138 (HR) contribute to the substrate site. Glu-174 is an active-site residue. Arg-213 lines the substrate pocket. The active site involves His-249. Substrate is bound by residues Asp-251 and Asn-364. Cys-370 acts as the Nucleophile in catalysis.

The protein belongs to the succinylarginine dihydrolase family. As to quaternary structure, homodimer.

The catalysed reaction is N(2)-succinyl-L-arginine + 2 H2O + 2 H(+) = N(2)-succinyl-L-ornithine + 2 NH4(+) + CO2. It participates in amino-acid degradation; L-arginine degradation via AST pathway; L-glutamate and succinate from L-arginine: step 2/5. Functionally, catalyzes the hydrolysis of N(2)-succinylarginine into N(2)-succinylornithine, ammonia and CO(2). In Yersinia pseudotuberculosis serotype O:1b (strain IP 31758), this protein is N-succinylarginine dihydrolase.